Reading from the N-terminus, the 359-residue chain is CMP-N-acetylneuraminate-poly-alpha-2,8-sialyltransferase (359 aa).

Topologically, residues 1–7 (MRSIRKR) are cytoplasmic. A helical; Signal-anchor for type II membrane protein membrane pass occupies residues 8 to 20 (WTICTISLLLIFY). Residues 21–359 (KTKEMARTEE…KLTTGKCIKQ (339 aa)) lie on the Lumenal side of the membrane. N-linked (GlcNAc...) asparagine glycans are attached at residues Asn-50, Asn-74, and Asn-119. Cystine bridges form between Cys-142–Cys-292 and Cys-156–Cys-356. Positions 147 and 170 each coordinate CMP-N-acetyl-beta-neuraminate. Asn-204 and Asn-219 each carry an N-linked (GlcNAc...) asparagine glycan. 4 residues coordinate CMP-N-acetyl-beta-neuraminate: Ser-279, Thr-280, Gly-281, and Trp-301. His-331 acts as the Proton donor/acceptor in catalysis.

The protein belongs to the glycosyltransferase 29 family. Post-translationally, autopolysialylated.

The protein resides in the golgi apparatus membrane. It localises to the secreted. It catalyses the reaction [N-acetyl-alpha-D-neuraminosyl-(2-&gt;8)](n) + CMP-N-acetyl-beta-neuraminate = [N-acetyl-alpha-D-neuraminosyl-(2-&gt;8)](n+1) + CMP + H(+). Functionally, catalyzes the transfer of a sialic acid from a CMP-linked sialic acid donor onto a terminal alpha-2,3-, alpha-2,6-, or alpha-2,8-linked sialic acid of an N-linked glycan protein acceptor through alpha-2,8-linkages. Therefore, participates in polysialic acid synthesis on various sialylated N-acetyllactosaminyl oligosaccharides, including NCAM1 N-glycans, FETUB N-glycans and AHSG. It is noteworthy that alpha-2,3-linked sialic acid is apparently a better acceptor than alpha-2,6-linked sialic acid. This chain is CMP-N-acetylneuraminate-poly-alpha-2,8-sialyltransferase (ST8SIA4), found in Bos taurus (Bovine).